A 251-amino-acid chain; its full sequence is Ribonuclease HII (251 aa).

Residues 32–223 form the RNase H type-2 domain; sequence GPVAGVDEAG…VRERLGLRPL (192 aa). Residues Asp38, Glu39, and Asp132 each coordinate a divalent metal cation.

Belongs to the RNase HII family. It depends on Mn(2+) as a cofactor. Requires Mg(2+) as cofactor.

The protein resides in the cytoplasm. The enzyme catalyses Endonucleolytic cleavage to 5'-phosphomonoester.. Its function is as follows. Endonuclease that specifically degrades the RNA of RNA-DNA hybrids. The sequence is that of Ribonuclease HII from Nocardia farcinica (strain IFM 10152).